We begin with the raw amino-acid sequence, 148 residues long: F-box protein At3g55900 (148 aa).

Residues 9-59 (CRNLSELPQELLYKILGLLPTRNVVSTSLISHQRRSQFHWMERLKFRYPRL) form the F-box domain.

This chain is F-box protein At3g55900, found in Arabidopsis thaliana (Mouse-ear cress).